The chain runs to 364 residues: Myeloid cell surface antigen CD33 (364 aa).

The N-terminal stretch at 1–17 (MPLLLLLPLLWAGALAM) is a signal peptide. Topologically, residues 18 to 259 (DPNFWLQVQE…KQETRAGVVH (242 aa)) are extracellular. The Ig-like V-type domain occupies 19-135 (PNFWLQVQES…KYSYKSPQLS (117 aa)). 3 disulfides stabilise this stretch: cysteine 36–cysteine 169, cysteine 41–cysteine 101, and cysteine 163–cysteine 212. Residues asparagine 100 and asparagine 113 are each glycosylated (N-linked (GlcNAc...) asparagine). Arginine 119 contributes to the N-acetylneuraminate binding site. Positions 145-228 (PKILIPGTLE…AGVTTERTIQ (84 aa)) constitute an Ig-like C2-type domain. D-galactose is bound at residue glutamate 154. Asparagine 160, asparagine 209, and asparagine 230 each carry an N-linked (GlcNAc...) asparagine glycan. The chain crosses the membrane as a helical span at residues 260–282 (GAIGGAGVTALLALCLCLIFFIV). The Cytoplasmic segment spans residues 283-364 (KTHRRKAART…STEYSEVRTQ (82 aa)). The disordered stretch occupies residues 290–364 (ARTAVGRNDT…STEYSEVRTQ (75 aa)). 2 short sequence motifs (ITIM motif) span residues 338–343 (LHYASL) and 356–361 (TEYSEV). Tyrosine 340 and tyrosine 358 each carry phosphotyrosine; by LCK.

The protein belongs to the immunoglobulin superfamily. SIGLEC (sialic acid binding Ig-like lectin) family. As to quaternary structure, homodimer; disulfide-linked. Interacts with PTPN6/SHP-1 and PTPN11/SHP-2 upon phosphorylation. Interacts with C1QA (via C-terminus); this interaction activates CD33 inhibitory motifs. In terms of processing, glycosylated. Glycosylation at Asn-100 is critical for regulating ligand recognition. Phosphorylation of Tyr-340 is involved in binding to PTPN6 and PTPN11. Phosphorylation of Tyr-358 is involved in binding to PTPN6. LCK phosphorylates Tyr-340 efficiently and Tyr-358 to a lesser extent. In terms of tissue distribution, monocytic/myeloid lineage cells. In the brain, CD33 is mainly expressed on microglial cells.

Its subcellular location is the cell membrane. The protein localises to the peroxisome. Its function is as follows. Sialic-acid-binding immunoglobulin-like lectin (Siglec) that plays a role in mediating cell-cell interactions and in maintaining immune cells in a resting state. Preferentially recognizes and binds alpha-2,3- and more avidly alpha-2,6-linked sialic acid-bearing glycans. Upon engagement of ligands such as C1q or syalylated glycoproteins, two immunoreceptor tyrosine-based inhibitory motifs (ITIMs) located in CD33 cytoplasmic tail are phosphorylated by Src-like kinases such as LCK. These phosphorylations provide docking sites for the recruitment and activation of protein-tyrosine phosphatases PTPN6/SHP-1 and PTPN11/SHP-2. In turn, these phosphatases regulate downstream pathways through dephosphorylation of signaling molecules. One of the repressive effect of CD33 on monocyte activation requires phosphoinositide 3-kinase/PI3K. The protein is Myeloid cell surface antigen CD33 (CD33) of Homo sapiens (Human).